Consider the following 413-residue polypeptide: Arginine biosynthesis bifunctional protein ArgJ (413 aa).

T160, K186, T197, E277, N408, and T413 together coordinate substrate. Residue T197 is the Nucleophile of the active site.

The protein belongs to the ArgJ family. In terms of assembly, heterotetramer of two alpha and two beta chains.

The protein localises to the cytoplasm. The catalysed reaction is N(2)-acetyl-L-ornithine + L-glutamate = N-acetyl-L-glutamate + L-ornithine. It carries out the reaction L-glutamate + acetyl-CoA = N-acetyl-L-glutamate + CoA + H(+). It functions in the pathway amino-acid biosynthesis; L-arginine biosynthesis; L-ornithine and N-acetyl-L-glutamate from L-glutamate and N(2)-acetyl-L-ornithine (cyclic): step 1/1. The protein operates within amino-acid biosynthesis; L-arginine biosynthesis; N(2)-acetyl-L-ornithine from L-glutamate: step 1/4. In terms of biological role, catalyzes two activities which are involved in the cyclic version of arginine biosynthesis: the synthesis of N-acetylglutamate from glutamate and acetyl-CoA as the acetyl donor, and of ornithine by transacetylation between N(2)-acetylornithine and glutamate. The sequence is that of Arginine biosynthesis bifunctional protein ArgJ from Prochlorococcus marinus (strain SARG / CCMP1375 / SS120).